A 392-amino-acid polypeptide reads, in one-letter code: MPNFKSKKIKEINLPYSKDDVEFLWLAKNDNVSLIYTKVQEESFFLQIKKAQNGFVIKGDKHTKPSKIGYLQKALKIFKEGFCEDIINEAFGLKNNALIEKTPFIVDNFDELLSKLQGKIYIEIGFGSGRHLLYQAKENPNVLILGVEIYNPALTQVAKLAKVQNVNNILLIQSDARLLLSVLKSKSVEKIFLHFPVPWDKKPHRRVIGKDFCKECARVLTQNGRFELRTDSFEYFNFTLEQFLTFPAPKFSLRKNENLEISSKYEDRWKKQEKNIYDLWVWNFNQECKNYELNEFNLSSVEFSKEDLKKIEQNFKNITIKKDDFFLHFESIYKQDENLLLKVAFGAFNKPEHCYLHLDKTIDFVFKEPFKIQENIKAINELKEILKVQFKI.

Residues glutamate 123, glutamate 148, and aspartate 175 each coordinate S-adenosyl-L-methionine. Substrate is bound by residues lysine 201 and aspartate 231.

This sequence belongs to the class I-like SAM-binding methyltransferase superfamily. TrmB family.

The catalysed reaction is guanosine(46) in tRNA + S-adenosyl-L-methionine = N(7)-methylguanosine(46) in tRNA + S-adenosyl-L-homocysteine. The protein operates within tRNA modification; N(7)-methylguanine-tRNA biosynthesis. Functionally, catalyzes the formation of N(7)-methylguanine at position 46 (m7G46) in tRNA. In Campylobacter jejuni subsp. jejuni serotype O:6 (strain 81116 / NCTC 11828), this protein is tRNA (guanine-N(7)-)-methyltransferase.